The chain runs to 71 residues: Conotoxin ba5b (71 aa).

Residues 1 to 19 (MLCLPVFITLLLLVSPSAA) form the signal peptide. Positions 20 to 52 (LPVESELQRDLTQDSPKDFRIREPLLLSKMFDR) are excised as a propeptide. 2 cysteine pairs are disulfide-bonded: Cys-54/Cys-63 and Cys-55/Cys-64. Position 64 is a cysteine amide (Cys-64). Positions 66-71 (RYQRGS) are excised as a propeptide.

Belongs to the conotoxin T superfamily. In terms of tissue distribution, expressed by the venom duct.

The protein resides in the secreted. The polypeptide is Conotoxin ba5b (Conus bayani (Bayan's cone)).